A 301-amino-acid polypeptide reads, in one-letter code: Tetrahydromethanopterin S-methyltransferase subunit E (301 aa).

5 helical membrane-spanning segments follow: residues 85-105 (VIFA…TYCI), 130-150 (HTPV…VVSY), 151-171 (IMVA…IWGI), 232-252 (PVTG…TAVF), and 258-278 (LTMG…LIIW).

The protein belongs to the MtrE family. As to quaternary structure, the complex is composed of 8 subunits; MtrA, MtrB, MtrC, MtrD, MtrE, MtrF, MtrG and MtrH.

The protein resides in the cell membrane. It carries out the reaction 5-methyl-5,6,7,8-tetrahydromethanopterin + coenzyme M + 2 Na(+)(in) = 5,6,7,8-tetrahydromethanopterin + methyl-coenzyme M + 2 Na(+)(out). Part of a complex that catalyzes the formation of methyl-coenzyme M and tetrahydromethanopterin from coenzyme M and methyl-tetrahydromethanopterin. This is an energy-conserving, sodium-ion translocating step. This Methanococcoides burtonii (strain DSM 6242 / NBRC 107633 / OCM 468 / ACE-M) protein is Tetrahydromethanopterin S-methyltransferase subunit E.